The primary structure comprises 146 residues: Holo-[acyl-carrier-protein] synthase (146 aa).

Residues D9 and E63 each coordinate Mg(2+).

Belongs to the P-Pant transferase superfamily. AcpS family. It depends on Mg(2+) as a cofactor.

The protein localises to the cytoplasm. The catalysed reaction is apo-[ACP] + CoA = holo-[ACP] + adenosine 3',5'-bisphosphate + H(+). Functionally, transfers the 4'-phosphopantetheine moiety from coenzyme A to a Ser of acyl-carrier-protein. In Burkholderia ambifaria (strain ATCC BAA-244 / DSM 16087 / CCUG 44356 / LMG 19182 / AMMD) (Burkholderia cepacia (strain AMMD)), this protein is Holo-[acyl-carrier-protein] synthase.